The chain runs to 64 residues: Large ribosomal subunit protein bL33 (64 aa).

The protein belongs to the bacterial ribosomal protein bL33 family.

This Nostoc sp. (strain PCC 7120 / SAG 25.82 / UTEX 2576) protein is Large ribosomal subunit protein bL33.